A 483-amino-acid chain; its full sequence is Protein disulfide-isomerase 5-3 (483 aa).

3 N-linked (GlcNAc...) asparagine glycosylation sites follow: Asn53, Asn74, and Asn99. The 131-residue stretch at 133–263 folds into the Thioredoxin domain; it reads EETKEEFPDG…IVKMVEGLVA (131 aa). Catalysis depends on Cys170, which acts as the Nucleophile. N-linked (GlcNAc...) asparagine glycosylation is found at Asn279, Asn326, and Asn376. The helical transmembrane segment at 442–462 threads the bilayer; it reads FSHFITNLCAIIGGVFTVAGI.

Belongs to the protein disulfide isomerase family. In terms of tissue distribution, widely expressed.

The protein localises to the membrane. Acts as a protein-folding catalyst that interacts with nascent polypeptides to catalyze the formation, isomerization, and reduction or oxidation of disulfide bonds. The protein is Protein disulfide-isomerase 5-3 (PDIL5-3) of Arabidopsis thaliana (Mouse-ear cress).